An 84-amino-acid chain; its full sequence is Cell division topological specificity factor (84 aa).

This sequence belongs to the MinE family.

Its function is as follows. Prevents the cell division inhibition by proteins MinC and MinD at internal division sites while permitting inhibition at polar sites. This ensures cell division at the proper site by restricting the formation of a division septum at the midpoint of the long axis of the cell. This is Cell division topological specificity factor from Ralstonia nicotianae (strain ATCC BAA-1114 / GMI1000) (Ralstonia solanacearum).